Here is a 422-residue protein sequence, read N- to C-terminus: L-threonine dehydratase biosynthetic IlvA (422 aa).

Lys56 bears the N6-(pyridoxal phosphate)lysine mark. Residues Asn83, 189 to 193 (GGGGL), and Ser315 each bind pyridoxal 5'-phosphate. The region spanning 339 to 413 (HYFILNFPQR…FDPSNIYINE (75 aa)) is the ACT-like domain.

This sequence belongs to the serine/threonine dehydratase family. As to quaternary structure, homotetramer. It depends on pyridoxal 5'-phosphate as a cofactor.

The enzyme catalyses L-threonine = 2-oxobutanoate + NH4(+). It participates in amino-acid biosynthesis; L-isoleucine biosynthesis; 2-oxobutanoate from L-threonine: step 1/1. In terms of biological role, catalyzes the anaerobic formation of alpha-ketobutyrate and ammonia from threonine in a two-step reaction. The first step involved a dehydration of threonine and a production of enamine intermediates (aminocrotonate), which tautomerizes to its imine form (iminobutyrate). Both intermediates are unstable and short-lived. The second step is the nonenzymatic hydrolysis of the enamine/imine intermediates to form 2-ketobutyrate and free ammonia. In the low water environment of the cell, the second step is accelerated by RidA. The polypeptide is L-threonine dehydratase biosynthetic IlvA (ilvA) (Staphylococcus epidermidis (strain ATCC 12228 / FDA PCI 1200)).